The following is a 165-amino-acid chain: UPF0303 protein Rleg2_2653 (165 aa).

The protein belongs to the UPF0303 family.

In Rhizobium leguminosarum bv. trifolii (strain WSM2304), this protein is UPF0303 protein Rleg2_2653.